We begin with the raw amino-acid sequence, 448 residues long: Methylenetetrahydrofolate--tRNA-(uracil-5-)-methyltransferase TrmFO (448 aa).

13–18 is an FAD binding site; sequence GAGLAG.

This sequence belongs to the MnmG family. TrmFO subfamily. It depends on FAD as a cofactor.

The protein resides in the cytoplasm. The catalysed reaction is uridine(54) in tRNA + (6R)-5,10-methylene-5,6,7,8-tetrahydrofolate + NADH + H(+) = 5-methyluridine(54) in tRNA + (6S)-5,6,7,8-tetrahydrofolate + NAD(+). It catalyses the reaction uridine(54) in tRNA + (6R)-5,10-methylene-5,6,7,8-tetrahydrofolate + NADPH + H(+) = 5-methyluridine(54) in tRNA + (6S)-5,6,7,8-tetrahydrofolate + NADP(+). Catalyzes the folate-dependent formation of 5-methyl-uridine at position 54 (M-5-U54) in all tRNAs. In Streptococcus pyogenes serotype M3 (strain ATCC BAA-595 / MGAS315), this protein is Methylenetetrahydrofolate--tRNA-(uracil-5-)-methyltransferase TrmFO.